The sequence spans 152 residues: uncharacterized protein (152 aa).

This is an uncharacterized protein from Mycobacterium tuberculosis (strain ATCC 25618 / H37Rv).